Reading from the N-terminus, the 408-residue chain is Multidrug resistance protein MdtG (408 aa).

The next 11 membrane-spanning stretches (helical) occupy residues 16 to 36 (LIVAWLGCFLTGAAFSLVMPF), 58 to 78 (IVFSITFLFSSIASPFWGGLA), 92 to 112 (LGMGIVMVLMGLAQNIWQFLI), 115 to 135 (ALLGLLGGFVPNANALIATQV), 146 to 166 (TLSTGGVSGALLGPMAGGLLA), 173 to 193 (PVFFITASVLILCFFVTLFCI), 224 to 244 (LFVTTLIIQVATGSIAPILTL), 256 to 276 (VAFISGMIASVPGVAALLSAP), 290 to 310 (ILITALIFSVLLLIPMSYVQT), 319 to 339 (FLLGAADGALLPAVQTLLVYN), and 378 to 398 (AVFLVTAGVVLFNAVYSWNSL).

The protein belongs to the major facilitator superfamily. DHA1 family. MdtG (TC 2.A.1.2.20) subfamily.

The protein localises to the cell inner membrane. In terms of biological role, confers resistance to fosfomycin and deoxycholate. The polypeptide is Multidrug resistance protein MdtG (Escherichia coli (strain 55989 / EAEC)).